Reading from the N-terminus, the 1230-residue chain is Cullin-associated NEDD8-dissociated protein 1 (1230 aa).

Ala2 is subject to N-acetylalanine. HEAT repeat units follow at residues 2-39, 44-81, 83-119, 131-165, 171-208, 210-247, 248-282, 289-366, 370-407, 424-467, 471-510, and 515-552; these read ASAS…KDSI, DSER…KVKE, QVET…ELPP, CKKI…LSRQ, NFHP…SCGN, VFVG…QAGH, RIGE…FESF, EVYP…TRHE, EFYK…QTRP, PLTM…VLPG, QHIP…NHSP, and PHVQ…VIRP. Lys55 carries the N6-acetyllysine modification. The interval 315 to 343 is disordered; that stretch reads DEDEDENAMDADGGDDDDQGSDDEYSDDG. Ser335 carries the post-translational modification Phosphoserine. Ser558 carries the phosphoserine modification. HEAT repeat units lie at residues 563–602, 606–643, 646–683, 688–725, 729–768, 770–808, 809–845, 852–889, 890–927, 928–960, 961–998, 1002–1039, 1043–1097, 1099–1133, and 1140–1189; these read PYIK…NLGD, SDLP…LKID, PVLG…NYSD, AMID…VYPS, KISG…TGTN, LGYM…ALTR, ACPK…LGEV, SGQL…GNLP, EYLP…GLKP, YVEN…KLTL, IDPE…DHPQ, PLLK…NKPS, DLLD…DSCL, RLDI…LSTL, and QRLD…IPEA. Lys971 is modified (N6-acetyllysine).

Belongs to the CAND family. Interacts with TBP. Part of a complex that contains CUL1 and RBX1. Interacts with unneddylated cullins: interacts with CUL1, CUL2, CUL3, CUL4A, CUL4B and CUL5. Does not bind neddylated CUL1. Interaction with cullins is abolished in presence of COMMD1, which antagonizes with CAND1 for interacting with cullins. Interacts with ERCC6. Interacts with DCUN1D1, DCUN1D2, DCUN1D3, DCUN1D4 and DCUN1D5; these interactions are bridged by cullins and strongly inhibits the neddylation of cullins.

It localises to the cytoplasm. It is found in the nucleus. Key assembly factor of SCF (SKP1-CUL1-F-box protein) E3 ubiquitin ligase complexes that promotes the exchange of the substrate-recognition F-box subunit in SCF complexes, thereby playing a key role in the cellular repertoire of SCF complexes. Acts as a F-box protein exchange factor. The exchange activity of CAND1 is coupled with cycles of neddylation conjugation: in the deneddylated state, cullin-binding CAND1 binds CUL1-RBX1, increasing dissociation of the SCF complex and promoting exchange of the F-box protein. Probably plays a similar role in other cullin-RING E3 ubiquitin ligase complexes. This is Cullin-associated NEDD8-dissociated protein 1 (CAND1) from Pongo abelii (Sumatran orangutan).